The following is a 42-amino-acid chain: Protein Tat (42 aa).

An interaction with human CREBBP region spans residues 1 to 24 (MEPVDPNLEPWNHPGSQPKTACNQ). The cysteine-rich stretch occupies residues 22–37 (CNQCYCKKCSYHCLVC). Residue K28 is modified to N6-acetyllysine; by host PCAF.

It belongs to the lentiviruses Tat family. As to quaternary structure, interacts with host CCNT1. Associates with the P-TEFb complex composed at least of Tat, P-TEFb (CDK9 and CCNT1), TAR RNA, RNA Pol II. Recruits the HATs CREBBP, TAF1/TFIID, EP300, PCAF and GCN5L2. Interacts with host KAT5/Tip60; this interaction targets the latter to degradation. Interacts with the host deacetylase SIRT1. Interacts with host capping enzyme RNGTT; this interaction stimulates RNGTT. Binds to host KDR, and to the host integrins ITGAV/ITGB3 and ITGA5/ITGB1. Interacts with host KPNB1/importin beta-1 without previous binding to KPNA1/importin alpha-1. Interacts with EIF2AK2. Interacts with host nucleosome assembly protein NAP1L1; this interaction may be required for the transport of Tat within the nucleus, since the two proteins interact at the nuclear rim. Interacts with host C1QBP/SF2P32; this interaction involves lysine-acetylated Tat. Interacts with the host chemokine receptors CCR2, CCR3 and CXCR4. Interacts with host DPP4/CD26; this interaction may trigger an anti-proliferative effect. Interacts with host LDLR. Interacts with the host extracellular matrix metalloproteinase MMP1. Interacts with host PRMT6; this interaction mediates Tat's methylation. Interacts with, and is ubiquitinated by MDM2/Hdm2. Interacts with host PSMC3 and HTATIP2. Interacts with STAB1; this interaction may overcome SATB1-mediated repression of IL2 and IL2RA (interleukin) in T cells by binding to the same domain than HDAC1. Interacts (when acetylated) with human CDK13, thereby increasing HIV-1 mRNA splicing and promoting the production of the doubly spliced HIV-1 protein Nef. Interacts with host TBP; this interaction modulates the activity of transcriptional pre-initiation complex. Interacts with host RELA. Interacts with host PLSCR1; this interaction negatively regulates Tat transactivation activity by altering its subcellular distribution. Post-translationally, phosphorylated by EIF2AK2 on serine and threonine residues adjacent to the basic region important for TAR RNA binding and function. Phosphorylation of Tat by EIF2AK2 is dependent on the prior activation of EIF2AK2 by dsRNA. In terms of processing, asymmetrical arginine methylation by host PRMT6 seems to diminish the transactivation capacity of Tat and affects the interaction with host CCNT1. Polyubiquitination by host MDM2 does not target Tat to degradation, but activates its transactivation function and fosters interaction with CCNT1 and TAR RNA.

It localises to the host nucleus. It is found in the host nucleolus. The protein resides in the host cytoplasm. Its subcellular location is the secreted. Transcriptional activator that increases RNA Pol II processivity, thereby increasing the level of full-length viral transcripts. Recognizes a hairpin structure at the 5'-LTR of the nascent viral mRNAs referred to as the transactivation responsive RNA element (TAR) and recruits the cyclin T1-CDK9 complex (P-TEFb complex) that will in turn hyperphosphorylate the RNA polymerase II to allow efficient elongation. The CDK9 component of P-TEFb and other Tat-activated kinases hyperphosphorylate the C-terminus of RNA Pol II that becomes stabilized and much more processive. Other factors such as HTATSF1/Tat-SF1, SUPT5H/SPT5, and HTATIP2 are also important for Tat's function. Besides its effect on RNA Pol II processivity, Tat induces chromatin remodeling of proviral genes by recruiting the histone acetyltransferases (HATs) CREBBP, EP300 and PCAF to the chromatin. This also contributes to the increase in proviral transcription rate, especially when the provirus integrates in transcriptionally silent region of the host genome. To ensure maximal activation of the LTR, Tat mediates nuclear translocation of NF-kappa-B by interacting with host RELA. Through its interaction with host TBP, Tat may also modulate transcription initiation. Tat can reactivate a latently infected cell by penetrating in it and transactivating its LTR promoter. In the cytoplasm, Tat is thought to act as a translational activator of HIV-1 mRNAs. Its function is as follows. Extracellular circulating Tat can be endocytosed by surrounding uninfected cells via the binding to several surface receptors such as CD26, CXCR4, heparan sulfate proteoglycans (HSPG) or LDLR. Neurons are rarely infected, but they internalize Tat via their LDLR. Through its interaction with nuclear HATs, Tat is potentially able to control the acetylation-dependent cellular gene expression. Modulates the expression of many cellular genes involved in cell survival, proliferation or in coding for cytokines or cytokine receptors. Tat plays a role in T-cell and neurons apoptosis. Tat induced neurotoxicity and apoptosis probably contribute to neuroAIDS. Circulating Tat also acts as a chemokine-like and/or growth factor-like molecule that binds to specific receptors on the surface of the cells, affecting many cellular pathways. In the vascular system, Tat binds to ITGAV/ITGB3 and ITGA5/ITGB1 integrins dimers at the surface of endothelial cells and competes with bFGF for heparin-binding sites, leading to an excess of soluble bFGF. The polypeptide is Protein Tat (Human immunodeficiency virus type 1 group M subtype C (isolate ETH2220) (HIV-1)).